A 394-amino-acid polypeptide reads, in one-letter code: HORMA domain-containing protein 1 (394 aa).

The HORMA domain occupies 24–226 (HQSLVLVKRL…TPFHIFKVKV (203 aa)). Residues 252 to 394 (KILRDKDVED…RKFSEPKEHI (143 aa)) form a disordered region. Residues 253-282 (ILRDKDVEDEQEHYTSDDLDMETKMEEQEK) show a composition bias toward basic and acidic residues. 2 stretches are compositionally biased toward polar residues: residues 310-324 (LSIS…VNKT) and 343-352 (KMANGNQPVK). Residues 362-374 (QHESGRRVLHHFD) show a composition bias toward basic and acidic residues. A Phosphoserine modification is found at serine 376. The short motif at 383 to 386 (KRRK) is the Nuclear localization signal element.

As to quaternary structure, interacts with HORMAD2. Interacts with IHO1. Phosphorylated at Ser-377 in a SPO11-dependent manner.

The protein localises to the nucleus. It localises to the chromosome. Its function is as follows. Plays a key role in meiotic progression. Regulates 3 different functions during meiosis: ensures that sufficient numbers of processed DNA double-strand breaks (DSBs) are available for successful homology search by increasing the steady-state numbers of single-stranded DSB ends. Promotes synaptonemal-complex formation independently of its role in homology search. Plays a key role in the male mid-pachytene checkpoint and the female meiotic prophase checkpoint: required for efficient build-up of ATR activity on unsynapsed chromosome regions, a process believed to form the basis of meiotic silencing of unsynapsed chromatin (MSUC) and meiotic prophase quality control in both sexes. The sequence is that of HORMA domain-containing protein 1 (HORMAD1) from Macaca fascicularis (Crab-eating macaque).